The following is a 569-amino-acid chain: Dicarboxylate transporter 1, chloroplastic (569 aa).

The transit peptide at 1 to 93 directs the protein to the chloroplast; it reads MASMALSLTS…VPSPAPVSAP (93 aa). Low complexity predominate over residues 23–74; it reads SLKPLSKSQPSISLPSLRSNASKSPSLSHKHFLSPPSLLLPHKLKPISASSP. A disordered region spans residues 23–93; that stretch reads SLKPLSKSQP…VPSPAPVSAP (71 aa). Pro residues predominate over residues 75 to 90; it reads TNPPPPPAPVPSPAPV. 12 helical membrane-spanning segments follow: residues 106-126, 134-154, 172-192, 241-261, 268-288, 317-337, 367-387, 388-408, 423-443, 450-470, 490-510, and 543-563; these read PLLA…PEGV, LAIF…LGAV, AAFS…FFFA, AGGI…SNVG, LGAW…SMFL, AAFV…YVVY, IMAV…KLGV, DAVT…VVTW, WFAA…ITWF, VVGG…LLYF, FLSV…VLSF, and YGFL…GLWW.

It belongs to the SLC13A/DASS transporter (TC 2.A.47) family. DIT1 subfamily. In terms of assembly, monomer. In terms of processing, the N-terminus is blocked. Expressed in leaves.

The protein resides in the plastid. It localises to the chloroplast inner membrane. Its function is as follows. 2-oxoglutarate/malate translocator that transports carbon skeletons into chloroplasts for net glutamate synthesis. This translocator exchanges malate for internal succinate, fumarate and 2-oxoglutarate but not for aspartate and glutamate. Involved with DIT2 in primary ammonia assimilation and in the re-assimilation of ammonia generated by the photorespiratory pathway. Imports 2-oxoglutarate into plastids as precursor for ammonia assimilation. 2-oxoglutarate is converted to glutamate, the end product of ammonia assimilation, which is exported to the cytosol by DIT2. This chain is Dicarboxylate transporter 1, chloroplastic (DIT1), found in Spinacia oleracea (Spinach).